The sequence spans 63 residues: Large ribosomal subunit protein uL29 (63 aa).

It belongs to the universal ribosomal protein uL29 family.

This is Large ribosomal subunit protein uL29 from Erwinia tasmaniensis (strain DSM 17950 / CFBP 7177 / CIP 109463 / NCPPB 4357 / Et1/99).